The following is a 408-amino-acid chain: Acetate kinase (408 aa).

Residue asparagine 7 coordinates Mg(2+). Residue lysine 14 coordinates ATP. Substrate is bound at residue arginine 98. Aspartate 155 acts as the Proton donor/acceptor in catalysis. ATP-binding positions include 214–218, 289–291, and 337–341; these read HLGNG, DLR, and GVGEN. Mg(2+) is bound at residue glutamate 390.

It belongs to the acetokinase family. Homodimer. Mg(2+) is required as a cofactor. Requires Mn(2+) as cofactor.

It localises to the cytoplasm. It carries out the reaction acetate + ATP = acetyl phosphate + ADP. The protein operates within metabolic intermediate biosynthesis; acetyl-CoA biosynthesis; acetyl-CoA from acetate: step 1/2. Catalyzes the formation of acetyl phosphate from acetate and ATP. Can also catalyze the reverse reaction. The polypeptide is Acetate kinase (Cyanothece sp. (strain PCC 7425 / ATCC 29141)).